We begin with the raw amino-acid sequence, 316 residues long: Adenine deaminase (316 aa).

Residues His14, His16, and His194 each contribute to the Zn(2+) site. Catalysis depends on Glu197, which acts as the Proton donor. Position 275 (Asp275) interacts with Zn(2+). Residue Asp276 participates in substrate binding.

This sequence belongs to the metallo-dependent hydrolases superfamily. Adenosine and AMP deaminases family. Adenine deaminase type 2 subfamily. Requires Zn(2+) as cofactor.

It catalyses the reaction adenine + H2O + H(+) = hypoxanthine + NH4(+). Its function is as follows. Catalyzes the hydrolytic deamination of adenine to hypoxanthine. Plays an important role in the purine salvage pathway and in nitrogen catabolism. This Pseudomonas paraeruginosa (strain DSM 24068 / PA7) (Pseudomonas aeruginosa (strain PA7)) protein is Adenine deaminase.